Reading from the N-terminus, the 545-residue chain is ATP synthase subunit alpha (545 aa).

173–180 (GDRQTGKS) is a binding site for ATP.

This sequence belongs to the ATPase alpha/beta chains family. As to quaternary structure, F-type ATPases have 2 components, CF(1) - the catalytic core - and CF(0) - the membrane proton channel. CF(1) has five subunits: alpha(3), beta(3), gamma(1), delta(1), epsilon(1). CF(0) has three main subunits: a(1), b(2) and c(9-12). The alpha and beta chains form an alternating ring which encloses part of the gamma chain. CF(1) is attached to CF(0) by a central stalk formed by the gamma and epsilon chains, while a peripheral stalk is formed by the delta and b chains.

The protein resides in the cell membrane. The catalysed reaction is ATP + H2O + 4 H(+)(in) = ADP + phosphate + 5 H(+)(out). Functionally, produces ATP from ADP in the presence of a proton gradient across the membrane. The alpha chain is a regulatory subunit. This chain is ATP synthase subunit alpha, found in Pseudarthrobacter chlorophenolicus (strain ATCC 700700 / DSM 12829 / CIP 107037 / JCM 12360 / KCTC 9906 / NCIMB 13794 / A6) (Arthrobacter chlorophenolicus).